The primary structure comprises 111 residues: Pyrimidine/purine nucleoside phosphorylase 1 (111 aa).

Belongs to the nucleoside phosphorylase PpnP family.

The catalysed reaction is a purine D-ribonucleoside + phosphate = a purine nucleobase + alpha-D-ribose 1-phosphate. The enzyme catalyses adenosine + phosphate = alpha-D-ribose 1-phosphate + adenine. It carries out the reaction cytidine + phosphate = cytosine + alpha-D-ribose 1-phosphate. It catalyses the reaction guanosine + phosphate = alpha-D-ribose 1-phosphate + guanine. The catalysed reaction is inosine + phosphate = alpha-D-ribose 1-phosphate + hypoxanthine. The enzyme catalyses thymidine + phosphate = 2-deoxy-alpha-D-ribose 1-phosphate + thymine. It carries out the reaction uridine + phosphate = alpha-D-ribose 1-phosphate + uracil. It catalyses the reaction xanthosine + phosphate = alpha-D-ribose 1-phosphate + xanthine. Its function is as follows. Catalyzes the phosphorolysis of diverse nucleosides, yielding D-ribose 1-phosphate and the respective free bases. Can use uridine, adenosine, guanosine, cytidine, thymidine, inosine and xanthosine as substrates. Also catalyzes the reverse reactions. This is Pyrimidine/purine nucleoside phosphorylase 1 from Psychrobacter arcticus (strain DSM 17307 / VKM B-2377 / 273-4).